The sequence spans 121 residues: uncharacterized protein (121 aa).

Residues 6–26 (ITTASILLVVIVAFCAAAPMI) form a helical membrane-spanning segment.

The protein localises to the membrane. This is an uncharacterized protein from Caenorhabditis elegans.